We begin with the raw amino-acid sequence, 475 residues long: Coagulation factor X (475 aa).

The N-terminal stretch at 1–20 (MAGRLLLLLLCAALPDELRA) is a signal peptide. Residues 21 to 40 (EGGVFIKKESADKFLERTKR) constitute a propeptide that is removed on maturation. Residues 41 to 85 (ANSFLEEMKQGNIERECNEERCSKEEAREAFEDNEKTEEFWNIYV) enclose the Gla domain. 4-carboxyglutamate occurs at positions 46, 47, 54, 56, 59, 60, 65, 66, 69, 72, and 79. Cysteines 57 and 62 form a disulfide. One can recognise an EGF-like 1; calcium-binding domain in the interval 86 to 122 (DGDQCSSNPCHYGGQCKDGLGSYTCSCLDGYQGKNCE). 11 cysteine pairs are disulfide-bonded: cysteine 90–cysteine 101, cysteine 95–cysteine 110, cysteine 112–cysteine 121, cysteine 129–cysteine 140, cysteine 136–cysteine 152, cysteine 154–cysteine 167, cysteine 175–cysteine 348, cysteine 247–cysteine 252, cysteine 267–cysteine 283, cysteine 396–cysteine 410, and cysteine 421–cysteine 449. At aspartate 103 the chain carries (3R)-3-hydroxyaspartate. The EGF-like 2 domain maps to 125 to 168 (IPKYCKINNGDCEQFCSIKKSVQKDVVCSCTSGYELAEDGKQCV). Residues 186-240 (SVILPTNSNTNATSDQDVPSTNGSILEEVFTTTTESPTPPPRNGSSITDPNVDTR) constitute a propeptide, activation peptide. Residues asparagine 196, asparagine 207, and asparagine 228 are each glycosylated (N-linked (GlcNAc...) asparagine). The interval 216-237 (TTTTESPTPPPRNGSSITDPNV) is disordered. Positions 241-473 (IVGGDECRPG…FLRWVRTVMR (233 aa)) constitute a Peptidase S1 domain. Catalysis depends on histidine 282, which acts as the Charge relay system. An N-linked (GlcNAc...) asparagine glycan is attached at asparagine 285. The active-site Charge relay system is aspartate 328. Catalysis depends on serine 425, which acts as the Charge relay system.

Belongs to the peptidase S1 family. The two chains are formed from a single-chain precursor by the excision of two Arg residues and are held together by 1 or more disulfide bonds. Post-translationally, the vitamin K-dependent, enzymatic carboxylation of some glutamate residues allows the modified protein to bind calcium. The activation peptide is cleaved by factor IXa (in the intrinsic pathway), or by factor VIIa (in the extrinsic pathway). In terms of processing, the iron and 2-oxoglutarate dependent 3-hydroxylation of aspartate and asparagine is (R) stereospecific within EGF domains. Liver and chorioallantoic membrane.

The protein localises to the secreted. It catalyses the reaction Selective cleavage of Arg-|-Thr and then Arg-|-Ile bonds in prothrombin to form thrombin.. Functionally, factor Xa is a vitamin K-dependent glycoprotein that converts prothrombin to thrombin in the presence of factor Va, calcium and phospholipid during blood clotting. VAP cleaves the fusion proteins of Sendai virus, NDV, and influenza virus a at a specific single arginine-containing site, and plays a key role in the viral spreading in the allantoic sac. The polypeptide is Coagulation factor X (F10) (Gallus gallus (Chicken)).